The primary structure comprises 260 residues: MAFVPPQAGYDRAITVFSPDGRLFQVNYAREAVKRGATAVGVKCKDGVVLAVEKRITSRLIEPESYEKIFQIDDHIAAASSGIIADARVLVNRARLEAQIHRLTYGEPAPLAVIVKKICDLKQMHTQYGGVRPFGAALLMAGVNDKPELYETDPSGAYFAWKAVAIGSGRNTAMAIFEDKYRDDMTLDEAIKLAIFALAKTMEKPSAENIEVAVITVKDKKFRKLSKEEIEKFLGEVMKEVEEEEVKEKEEDYSELDSHY.

The protein belongs to the peptidase T1A family. As to quaternary structure, the 20S proteasome core is composed of 14 alpha and 14 beta subunits that assemble into four stacked heptameric rings, resulting in a barrel-shaped structure. The two inner rings, each composed of seven catalytic beta subunits, are sandwiched by two outer rings, each composed of seven alpha subunits. The catalytic chamber with the active sites is on the inside of the barrel. Has a gated structure, the ends of the cylinder being occluded by the N-termini of the alpha-subunits. Is capped at one or both ends by the proteasome regulatory ATPase, PAN.

The protein localises to the cytoplasm. The formation of the proteasomal ATPase PAN-20S proteasome complex, via the docking of the C-termini of PAN into the intersubunit pockets in the alpha-rings, triggers opening of the gate for substrate entry. Interconversion between the open-gate and close-gate conformations leads to a dynamic regulation of the 20S proteasome proteolysis activity. Its function is as follows. Component of the proteasome core, a large protease complex with broad specificity involved in protein degradation. The sequence is that of Proteasome subunit alpha from Pyrococcus abyssi (strain GE5 / Orsay).